The following is a 147-amino-acid chain: Flagellar assembly factor FliW (147 aa).

It belongs to the FliW family. As to quaternary structure, interacts with translational regulator CsrA and flagellin(s).

Its subcellular location is the cytoplasm. Acts as an anti-CsrA protein, binds CsrA and prevents it from repressing translation of its target genes, one of which is flagellin. Binds to flagellin and participates in the assembly of the flagellum. This chain is Flagellar assembly factor FliW, found in Chromobacterium violaceum (strain ATCC 12472 / DSM 30191 / JCM 1249 / CCUG 213 / NBRC 12614 / NCIMB 9131 / NCTC 9757 / MK).